The following is a 340-amino-acid chain: QSMSTLHQEEAFEKADQLSLKKTLEETEAFHKKLNEDHLLHAPEPVIKPGTAYKNQVPINVQAHPGKYIIESRYGVHTLEINDDTRFHSGASTLPPSXYASRFEIHFQPEIQXYRNGVPIDAEXXGAPAIPKYNDYIIITXKQPAVDGGSPILGYFIDVGIGXPSRVSEPVAALDPAEKARLKSRPSAPXTGQIIVTEEEPSEEAGTENXQRVNTELPVKXSNNAGVXEPEETGGAEITGYYVNYREVIDGVPGRXREANIKAISDEAYKXEEXTIAVPGPPHMTFKNRARVVGGLPDVVTIQEGKLLASDEHXNLKYGSEISDFTVSVFIPEEEARSVA.

The interval 177–212 (AEKARLKSRPSAPXTGQIIVTEEEPSEEAGTENXQR) is disordered. A compositionally biased stretch (acidic residues) spans 197 to 206 (TEEEPSEEAG).

Homodimer. Interacts with TTN/titin and PNKD. As to expression, seems to be expressed in all cardiac and skeletal fibers.

Its subcellular location is the cytoplasm. It localises to the myofibril. The protein resides in the sarcomere. It is found in the m line. Functionally, major component of the vertebrate myofibrillar M band. Binds myosin, titin, and light meromyosin. This binding is dose dependent. In Bos taurus (Bovine), this protein is Myomesin-1 (MYOM1).